The primary structure comprises 116 residues: Iron-sulfur cluster insertion protein ErpA (116 aa).

Residues Cys44, Cys108, and Cys110 each contribute to the iron-sulfur cluster site.

This sequence belongs to the HesB/IscA family. As to quaternary structure, homodimer. Iron-sulfur cluster is required as a cofactor.

Functionally, required for insertion of 4Fe-4S clusters for at least IspG. This Ectopseudomonas mendocina (strain ymp) (Pseudomonas mendocina) protein is Iron-sulfur cluster insertion protein ErpA.